A 395-amino-acid chain; its full sequence is Probable hercynylcysteine sulfoxide lyase (395 aa).

The segment at 1-21 (MQDEAMRRSGANSPAGDSLAD) is disordered. K220 is subject to N6-(pyridoxal phosphate)lysine.

It belongs to the class-V pyridoxal-phosphate-dependent aminotransferase family. EgtE subfamily. The cofactor is pyridoxal 5'-phosphate.

The catalysed reaction is S-(hercyn-2-yl)-L-cysteine S-oxide + AH2 + H(+) = ergothioneine + pyruvate + A + NH4(+). The protein operates within amino-acid biosynthesis; ergothioneine biosynthesis. Its function is as follows. Probably catalyzes the conversion of hercynylcysteine sulfoxide to ergothioneine. ERG is one of the major redox buffers which protects bacteria against redox stressors and antibiotics; loss of ERG or mycothiol (MSH, the other major redox buffer in this bacteria) leads to respiratory alterations and bioenergetic deficiencies that negatively impact virulence. The protein is Probable hercynylcysteine sulfoxide lyase of Mycobacterium tuberculosis (strain CDC 1551 / Oshkosh).